Here is a 504-residue protein sequence, read N- to C-terminus: Cytochrome P450 monooxygenase gliF (504 aa).

Residues 13 to 31 (AVAVSFGVGLLYWVYRLLL) form a helical membrane-spanning segment. N-linked (GlcNAc...) asparagine glycosylation is found at N197 and N299. C449 lines the heme pocket.

It belongs to the cytochrome P450 family. The cofactor is heme.

The protein resides in the membrane. Its pathway is mycotoxin biosynthesis. Functionally, cytochrome P450 monooxygenase; part of the gene cluster that mediates the biosynthesis of gliotoxin, a member of the epipolythiodioxopiperazine (ETP) class of toxins characterized by a disulfide bridged cyclic dipeptide. The first step in gliotoxin biosynthesis is the condensation of serine and phenylalanine to form the cyclo-L-phenylalanyl-L-serine diketopiperazine (DKP) by the NRPS gliP. GliP is also able to produce the DKP cyclo-L-tryptophanyl-L-serine, suggesting that the substrate specificity of the first adenylation (A) domain in gliP is sufficiently relaxed to accommodate both L-Phe and L-Trp. The cytochrome P450 monooxygenase gliC has been shown to catalyze the subsequent hydroxylation of the alpha-carbon of L-Phe in cyclo-L-phenylalanyl-L-serine whereas the second cytochrome P450 enzyme, gliF, is presumably involved in the modification of the DKP side chain. The glutathione S-transferase (GST) gliG then forms a bis-glutathionylated biosynthetic intermediate which is responsible for the sulfurization of gliotoxin. This bis-glutathionylated intermediate is subsequently processed by the gamma-glutamyl cyclotransferase gliK to remove both gamma-glutamyl moieties. Subsequent processing via gliI yields a biosynthetic intermediate, which is N-methylated via the N-methyltransferase gliN, before the gliotoxin oxidoreductase gliT-mediated disulfide bridge closure. GliN-mediated amide methylation confers stability to ETP, damping the spontaneous formation of tri- and tetrasulfides. Intracellular dithiol gliotoxin oxidized by gliT is subsequently effluxed by gliA. Gliotoxin contributes to pathogenesis during invasive aspergillosis. In macrophages and neutrophils, gliotoxin showed inhibition of various different cell functions including cytokine production, antigen presentation, phagocytosis, and production of reactive oxygen species. This Aspergillus fumigatus (strain ATCC MYA-4609 / CBS 101355 / FGSC A1100 / Af293) (Neosartorya fumigata) protein is Cytochrome P450 monooxygenase gliF.